The chain runs to 94 residues: MLKPLGDRIVIEVVETEEKTASGIVLPDTAKEKPQEGRVVAVGTGRVLDNGQRVAPEVEVGDRIIFSKYAGTEVKYDGKEYLILRESDILAVIG.

The protein belongs to the GroES chaperonin family. As to quaternary structure, heptamer of 7 subunits arranged in a ring. Interacts with the chaperonin GroEL.

It is found in the cytoplasm. Together with the chaperonin GroEL, plays an essential role in assisting protein folding. The GroEL-GroES system forms a nano-cage that allows encapsulation of the non-native substrate proteins and provides a physical environment optimized to promote and accelerate protein folding. GroES binds to the apical surface of the GroEL ring, thereby capping the opening of the GroEL channel. This chain is Co-chaperonin GroES, found in Geobacillus thermodenitrificans (strain NG80-2).